Consider the following 316-residue polypeptide: Calumenin-B (316 aa).

A signal peptide spans 1-19 (MELRPLVMCFALCVVYASS). EF-hand domains are found at residues 69 to 104 (ESKE…SQKR), 105 to 140 (WIYD…YILD), 152 to 187 (QMIS…EEYD), 189 to 224 (MKDI…QEGD), 230 to 265 (WVRT…SDYD), and 266 to 301 (HAEA…FVGS). Positions 82, 84, 86, 88, 93, 118, 120, 122, and 129 each coordinate Ca(2+). Residue asparagine 132 is glycosylated (N-linked (GlcNAc...) asparagine). Aspartate 165, aspartate 167, aspartate 169, lysine 171, glutamate 176, aspartate 202, asparagine 204, aspartate 206, glutamate 213, aspartate 243, asparagine 245, aspartate 247, arginine 249, glutamate 254, aspartate 279, aspartate 281, aspartate 283, lysine 285, and glutamate 290 together coordinate Ca(2+). Positions 313–316 (HDEF) match the Prevents secretion from ER motif.

Belongs to the CREC family. In terms of assembly, interacts with ggcx.

It is found in the endoplasmic reticulum membrane. It localises to the golgi apparatus. Its subcellular location is the secreted. The protein localises to the melanosome. The protein resides in the sarcoplasmic reticulum lumen. Its function is as follows. Involved in regulation of vitamin K-dependent carboxylation of multiple N-terminal glutamate residues. Seems to inhibit gamma-carboxylase ggcx. Binds 7 calcium ions with a low affinity. In Salmo salar (Atlantic salmon), this protein is Calumenin-B (calub).